Consider the following 366-residue polypeptide: tRNA/tmRNA (uracil-C(5))-methyltransferase (366 aa).

Residues Gln-190, Tyr-218, Asn-223, Glu-239, and Asp-299 each coordinate S-adenosyl-L-methionine. The Nucleophile role is filled by Cys-324. The active-site Proton acceptor is the Glu-358.

The protein belongs to the class I-like SAM-binding methyltransferase superfamily. RNA M5U methyltransferase family. TrmA subfamily.

The enzyme catalyses uridine(54) in tRNA + S-adenosyl-L-methionine = 5-methyluridine(54) in tRNA + S-adenosyl-L-homocysteine + H(+). It carries out the reaction uridine(341) in tmRNA + S-adenosyl-L-methionine = 5-methyluridine(341) in tmRNA + S-adenosyl-L-homocysteine + H(+). Functionally, dual-specificity methyltransferase that catalyzes the formation of 5-methyluridine at position 54 (m5U54) in all tRNAs, and that of position 341 (m5U341) in tmRNA (transfer-mRNA). In Salmonella heidelberg (strain SL476), this protein is tRNA/tmRNA (uracil-C(5))-methyltransferase.